The chain runs to 338 residues: Ribosomal RNA small subunit methyltransferase H (338 aa).

S-adenosyl-L-methionine-binding positions include 53–55 (GGH), aspartate 72, tyrosine 99, aspartate 123, and glutamine 130. The tract at residues 277 to 298 (ITPRSKSKSPEGLPVELPGMGP) is disordered.

Belongs to the methyltransferase superfamily. RsmH family.

The protein resides in the cytoplasm. The enzyme catalyses cytidine(1402) in 16S rRNA + S-adenosyl-L-methionine = N(4)-methylcytidine(1402) in 16S rRNA + S-adenosyl-L-homocysteine + H(+). Functionally, specifically methylates the N4 position of cytidine in position 1402 (C1402) of 16S rRNA. The chain is Ribosomal RNA small subunit methyltransferase H from Rhodococcus opacus (strain B4).